The primary structure comprises 931 residues: MSMKFLTGLQDLLGLYETGTAASSPASPIPPTSPSMFATPPHQQSHSSATSVRKKVCQEANSSADDPDSDARIRQCSHTRTVSFPADIGLITGYHDAPSALFHSIENSNRSIDPTEILKYYREACQRRQCAPSVGVEKQIGYFHKSPDTRQELLSLKGERVSHAQMEALEEIFKRVQFNTIDFEYTFLDDDCAISLGEMIEFYDSCVRLNLSFNKQIDVRGWAAMFKSIRNAISLQMLNLRYTNLNDRSIPSLCKLARAQPSASLTCIHLENTQMSGKNLLVLICALKYNTGIRELYLGDNGLQPTDGSHIYQLISSNTCLQLLDLRNNNIGDSGVRHICEGLRNRESIEKSALSAMVLWNNNVTGASMDSLAEALMENTKIETLNIGSNNLGVEGVARLKPALVSNSHLHRLGLQNTGINCEGAIILAECIADNTALLRVDIRDNPIALAGLLALHSAMKMNTSITLLNIDATCVRMSSEKVREYQDEFERYFREIQTYCDRNKDDVLKKLTVTFEDQDHVSEDTEKENKDADNDDKEPENEDGDTTPETSDSDASADQSDSPADKEKSEKSKKENNNNEKRPLMASASTSKVCQKERHQRFVRSSSLTCAETVHDIHDRLREMSGSTHSLDAAMSAATTLSPTMLTATYGSTPGPLDASSNTDSMKTIKKTFTVTSAAPPTLALAEWGSLPALPQASPTSTPVVRKLRRFSVSPSSSVFDVATTSSASTSPIPEVTASPHPIRPSTLAIGIPVTGSVPAGPSSAPMIFVDHHTEAASPDCTNTCEEPTTSREAERKRAEETIRQRRGQKEIKDTCRAVINDLLNYVEYEEKSQVERKASLLLRNAFSRPNPEELLKNLQRAESPLTPRTPVTPSRVLEIAEELEEETDEQVCQSVVRCLVRDVLQTEKNELRSTLDRRRRHNSVRNSPV.

The interval Thr-20 to Ala-71 is disordered. Over residues Pro-41–Ser-51 the composition is skewed to polar residues. LRR repeat units follow at residues Ala-232–Ala-259, Ser-262–Cys-285, Asn-290–Leu-314, Leu-323–Arg-346, Lys-351–Glu-374, Asn-379–Asn-407, His-409–Glu-430, and Asn-435–Ser-458. Positions Gln-519–Ala-533 are enriched in basic and acidic residues. Disordered regions lie at residues Gln-519 to Arg-602 and Pro-780 to Arg-807. Positions Asp-534–Thr-547 are enriched in acidic residues. Residues Ser-554–Ser-563 are compositionally biased toward low complexity. Composition is skewed to basic and acidic residues over residues Pro-564–Pro-584 and Thr-790–Arg-807.

This sequence belongs to the PPP1R37 family.

The sequence is that of Protein phosphatase 1 regulatory subunit 37 homolog from Caenorhabditis briggsae.